The primary structure comprises 450 residues: Phosphoglucosamine mutase 2 (450 aa).

The active-site Phosphoserine intermediate is the serine 101. The Mg(2+) site is built by serine 101, aspartate 245, aspartate 247, and aspartate 249. A Phosphoserine modification is found at serine 101.

This sequence belongs to the phosphohexose mutase family. Requires Mg(2+) as cofactor. Post-translationally, activated by phosphorylation.

It catalyses the reaction alpha-D-glucosamine 1-phosphate = D-glucosamine 6-phosphate. Functionally, catalyzes the conversion of glucosamine-6-phosphate to glucosamine-1-phosphate. This chain is Phosphoglucosamine mutase 2, found in Shewanella sp. (strain MR-4).